Consider the following 2925-residue polypeptide: TPR and ankyrin repeat-containing protein 1 (2925 aa).

2 TPR repeats span residues Ala-15–Tyr-48 and Lys-50–Ser-82. ANK repeat units follow at residues Glu-168–Thr-198, Pro-203–Gly-232, Asp-240–Leu-276, Ser-463–Ala-492, Glu-497–Phe-518, and Asn-546–Ile-575. Disordered regions lie at residues Ser-612–Thr-669, Pro-706–Glu-741, and Val-1077–Val-1103. Over residues Ser-624 to Phe-641 the composition is skewed to polar residues. Basic and acidic residues predominate over residues Ala-720–Pro-730. A compositionally biased stretch (acidic residues) spans Gly-1085 to Val-1103. TPR repeat units lie at residues Pro-1699–Lys-1732 and Leu-1793–Leu-1826. Positions Glu-2301 to Arg-2330 form a coiled coil.

The protein is TPR and ankyrin repeat-containing protein 1 (TRANK1) of Homo sapiens (Human).